A 352-amino-acid polypeptide reads, in one-letter code: Biotin synthase (352 aa).

Residues 44-262 (NRVQVSTLLS…LAVARLLMPK (219 aa)) enclose the Radical SAM core domain. Residues cysteine 59, cysteine 63, and cysteine 66 each coordinate [4Fe-4S] cluster. 4 residues coordinate [2Fe-2S] cluster: cysteine 103, cysteine 134, cysteine 194, and arginine 266.

This sequence belongs to the radical SAM superfamily. Biotin synthase family. In terms of assembly, homodimer. [4Fe-4S] cluster is required as a cofactor. The cofactor is [2Fe-2S] cluster.

The catalysed reaction is (4R,5S)-dethiobiotin + (sulfur carrier)-SH + 2 reduced [2Fe-2S]-[ferredoxin] + 2 S-adenosyl-L-methionine = (sulfur carrier)-H + biotin + 2 5'-deoxyadenosine + 2 L-methionine + 2 oxidized [2Fe-2S]-[ferredoxin]. It participates in cofactor biosynthesis; biotin biosynthesis; biotin from 7,8-diaminononanoate: step 2/2. Catalyzes the conversion of dethiobiotin (DTB) to biotin by the insertion of a sulfur atom into dethiobiotin via a radical-based mechanism. The sequence is that of Biotin synthase from Pseudomonas putida (strain W619).